Consider the following 804-residue polypeptide: Elongation factor G, mitochondrial (804 aa).

A mitochondrion-targeting transit peptide spans 1-9; it reads MVRPAQVRA. In terms of domain architecture, tr-type G spans 103–389; it reads SKVRNIGIAA…GVCDYLPNPS (287 aa). GTP is bound by residues 112 to 119, 187 to 191, and 241 to 244; these read AHIDSGKT, DTPGH, and NKMD.

This sequence belongs to the TRAFAC class translation factor GTPase superfamily. Classic translation factor GTPase family. EF-G/EF-2 subfamily.

Its subcellular location is the mitochondrion. It participates in protein biosynthesis; polypeptide chain elongation. In terms of biological role, mitochondrial GTPase that catalyzes the GTP-dependent ribosomal translocation step during translation elongation. During this step, the ribosome changes from the pre-translocational (PRE) to the post-translocational (POST) state as the newly formed A-site-bound peptidyl-tRNA and P-site-bound deacylated tRNA move to the P and E sites, respectively. Catalyzes the coordinated movement of the two tRNA molecules, the mRNA and conformational changes in the ribosome. The chain is Elongation factor G, mitochondrial (mef1) from Talaromyces stipitatus (strain ATCC 10500 / CBS 375.48 / QM 6759 / NRRL 1006) (Penicillium stipitatum).